Consider the following 587-residue polypeptide: Monocopper oxidase-like protein SKU5 (587 aa).

Residues 1 to 20 form the signal peptide; the sequence is MDLFKILLLVFFVNISFCFA. N14 and N58 each carry an N-linked (GlcNAc...) asparagine glycan. H80 contacts Cu cation. N-linked (GlcNAc...) asparagine glycosylation is found at N107, N169, N200, N257, N278, N293, N342, N362, N430, and N444. Cu cation is bound at residue H452. N-linked (GlcNAc...) asparagine glycosylation occurs at N534. The GPI-anchor amidated serine moiety is linked to residue S562. Residues 563–587 constitute a propeptide, removed in mature form; that stretch reads ASKSIGFTSLSMVVMALVMMMMLQH.

This sequence belongs to the multicopper oxidase family. It depends on Cu cation as a cofactor. Expressed in roots, hypocotyls, cotyledons, leaves, stems and flowers.

It localises to the secreted. Its subcellular location is the cell wall. The protein localises to the cell membrane. Its function is as follows. May be a monocopper oxidase of unknown specificity. Involved in directional growth processes, possibly by participating in cell wall expansion. The chain is Monocopper oxidase-like protein SKU5 (SKU5) from Arabidopsis thaliana (Mouse-ear cress).